The chain runs to 747 residues: DNA repair and recombination protein RAD54-like (747 aa).

The segment at 1–41 (MRRSLAPSQLAKRKPEGRSCDDEDWQPGLVTPRKRKSSSET) is disordered. The tract at residues 2–9 (RRSLAPSQ) is required for chromatin remodeling, strand pairing activities and coupling of ATPase activity. A Phosphoserine modification is found at S38. One can recognise a Helicase ATP-binding domain in the interval 170–345 (SRRIPGSHGC…FSLVHFVNSG (176 aa)). ATP is bound at residue 183–190 (DEMGLGKT). A DEGH box motif is present at residues 296–299 (DEGH). Residues 500 to 653 (VLDYILAVTR…CVVDEEQDVE (154 aa)) form the Helicase C-terminal domain. The residue at position 515 (K515) is an N6-acetyllysine. S572 is modified (phosphoserine; by NEK1).

The protein belongs to the SNF2/RAD54 helicase family. In terms of assembly, homohexamer. Interacts (via N-terminus) with RAD51. Interacts with NAP1L1. Interacts with BRD9; this interaction orchestrates RAD51-RAD54 complex formation. Post-translationally, acetylated. Acetylation promotes interaction with BRD9, and subsequently with RAD54, which is essential for homologous recombination (HR). In terms of processing, phosphorylated. Phosphorylation at Ser-572 by NEK1 specifically in G2 phase allows efficient removal of RAD51 filaments from DNA.

The protein localises to the nucleus. The enzyme catalyses ATP + H2O = ADP + phosphate + H(+). Functionally, plays an essential role in homologous recombination (HR) which is a major pathway for repairing DNA double-strand breaks (DSBs), single-stranded DNA (ssDNA) gaps, and stalled or collapsed replication forks. Acts as a molecular motor during the homology search and guides RAD51 ssDNA along a donor dsDNA thereby changing the homology search from the diffusion-based mechanism to a motor-guided mechanism. Also plays an essential role in RAD51-mediated synaptic complex formation which consists of three strands encased in a protein filament formed once homology is recognized. Once DNA strand exchange occured, dissociates RAD51 from nucleoprotein filaments formed on dsDNA. The chain is DNA repair and recombination protein RAD54-like (RAD54L) from Homo sapiens (Human).